A 91-amino-acid chain; its full sequence is Small ribosomal subunit protein bS18 (91 aa).

A disordered region spans residues 1–21 (MSDERTPQRSSGPRKKRPFQR). The span at 12 to 21 (GPRKKRPFQR) shows a compositional bias: basic residues.

Belongs to the bacterial ribosomal protein bS18 family. As to quaternary structure, part of the 30S ribosomal subunit. Forms a tight heterodimer with protein bS6.

Its function is as follows. Binds as a heterodimer with protein bS6 to the central domain of the 16S rRNA, where it helps stabilize the platform of the 30S subunit. The polypeptide is Small ribosomal subunit protein bS18 (Geotalea uraniireducens (strain Rf4) (Geobacter uraniireducens)).